The sequence spans 243 residues: UMP-CMP kinase 1 (243 aa).

29 to 34 lines the ATP pocket; the sequence is GSGKGT. An NMP region spans residues 49-78; sequence SAGDLLREEAKYDTEQGTMIKNLMNEGKLV. Residues Arg55, 76–78, and 103–106 contribute to the a ribonucleoside 5'-phosphate site; these read KLV and GFPR. Asn110 contributes to the CMP binding site. Residues 141-149 form an LID region; that stretch reads NRNQGRDDD. Arg142 is an ATP binding site. Residues Arg146 and Arg157 each coordinate a ribonucleoside 5'-phosphate. Arg185 contributes to the ATP binding site.

Belongs to the adenylate kinase family. UMP-CMP kinase subfamily. In terms of assembly, monomer. Mg(2+) serves as cofactor.

It is found in the cytoplasm. The protein localises to the nucleus. It catalyses the reaction UMP + ATP = UDP + ADP. It carries out the reaction CMP + ATP = CDP + ADP. The enzyme catalyses dCMP + ATP = dCDP + ADP. Functionally, catalyzes the phosphorylation of pyrimidine nucleoside monophosphates at the expense of ATP. Plays an important role in de novo pyrimidine nucleotide biosynthesis. Has preference for UMP and CMP as phosphate acceptors. The chain is UMP-CMP kinase 1 from Oryza sativa subsp. japonica (Rice).